Consider the following 34-residue polypeptide: QKELVPSKTTTCCGYSPGTMCPSCMCTNTCPPQK.

At Gln1 the chain carries Pyrrolidone carboxylic acid. Position 3 is a 4-carboxyglutamate (Glu3). An O-linked (HexNAc...) serine glycan is attached at Ser7. Thr9 is a glycosylation site (O-linked (HexNAc...) threonine). 4 positions are modified to 4-hydroxyproline: Pro17, Pro22, Pro31, and Pro32.

Belongs to the conotoxin A superfamily. In terms of processing, contains 3 disulfide bonds. In terms of tissue distribution, expressed by the venom duct.

Its subcellular location is the secreted. Functionally, probable neurotoxin with ion channel inhibitor activity. The polypeptide is Conotoxin S4.3 (Conus striatus (Striated cone)).